We begin with the raw amino-acid sequence, 586 residues long: Acyl-coenzyme A synthetase ACSM3, mitochondrial (586 aa).

Residues 1–27 (MLACVTMKMLRHAKCFQRLAIFGSVRA) constitute a mitochondrion transit peptide. Residues lysine 73 and lysine 106 each carry the N6-succinyllysine modification. Lysine 157 carries the N6-acetyllysine modification. ATP contacts are provided by residues 235-243 (TSGTSGYPK), 374-379 (EGYGQT), aspartate 461, arginine 476, and lysine 572.

This sequence belongs to the ATP-dependent AMP-binding enzyme family. Mg(2+) is required as a cofactor. Requires Mn(2+) as cofactor.

The protein localises to the mitochondrion. It localises to the mitochondrion matrix. The enzyme catalyses a medium-chain fatty acid + ATP + CoA = a medium-chain fatty acyl-CoA + AMP + diphosphate. It carries out the reaction propanoate + ATP + CoA = propanoyl-CoA + AMP + diphosphate. The catalysed reaction is butanoate + ATP + CoA = butanoyl-CoA + AMP + diphosphate. It catalyses the reaction 2-methylpropanoate + ATP + CoA = 2-methylpropanoyl-CoA + AMP + diphosphate. The enzyme catalyses 2-methylbutanoate + ATP + CoA = 2-methylbutanoyl-CoA + AMP + diphosphate. It carries out the reaction octanoate + ATP + CoA = octanoyl-CoA + AMP + diphosphate. In terms of biological role, catalyzes the activation of fatty acids by CoA to produce an acyl-CoA, the first step in fatty acid metabolism. Capable of activating medium-chain fatty acids with a preference for isobutyrate among fatty acids with 2-6 carbon atoms. The sequence is that of Acyl-coenzyme A synthetase ACSM3, mitochondrial (ACSM3) from Pongo abelii (Sumatran orangutan).